The following is a 351-amino-acid chain: Protein-glutamate methylesterase/protein-glutamine glutaminase (351 aa).

The Response regulatory domain occupies 3–120 (KTLVVDDSAL…EISKIENELV (118 aa)). The residue at position 54 (Asp-54) is a 4-aspartylphosphate. The 188-residue stretch at 160–347 (ILIGSSTGGP…EQIVRMIEVK (188 aa)) folds into the CheB-type methylesterase domain. Catalysis depends on residues Ser-165, His-192, and Asp-289.

The protein belongs to the CheB family. Phosphorylated by CheA. Phosphorylation of the N-terminal regulatory domain activates the methylesterase activity.

It localises to the cytoplasm. It catalyses the reaction [protein]-L-glutamate 5-O-methyl ester + H2O = L-glutamyl-[protein] + methanol + H(+). The catalysed reaction is L-glutaminyl-[protein] + H2O = L-glutamyl-[protein] + NH4(+). Its function is as follows. Involved in chemotaxis. Part of a chemotaxis signal transduction system that modulates chemotaxis in response to various stimuli. Catalyzes the demethylation of specific methylglutamate residues introduced into the chemoreceptors (methyl-accepting chemotaxis proteins or MCP) by CheR. Also mediates the irreversible deamidation of specific glutamine residues to glutamic acid. This is Protein-glutamate methylesterase/protein-glutamine glutaminase from Methanococcoides burtonii (strain DSM 6242 / NBRC 107633 / OCM 468 / ACE-M).